The chain runs to 597 residues: NADPH-dependent diflavin oxidoreductase 1 (597 aa).

A Flavodoxin-like domain is found at L6–W150. FMN contacts are provided by residues S12–A17, A59–G62, L97–N106, and D132. An FAD-binding FR-type domain is found at L206–P446. FAD-binding positions include R350, R382 to S385, and G416 to S419. NADP(+) is bound by residues T460, S515 to R516, K521 to Q525, and D558. W596 contacts FAD.

Belongs to the NADPH-dependent diflavin oxidoreductase NDOR1 family. It in the N-terminal section; belongs to the flavodoxin family. This sequence in the C-terminal section; belongs to the flavoprotein pyridine nucleotide cytochrome reductase family. Interacts with CIAPIN1; as part of the cytosolic iron-sulfur (Fe-S) protein assembly (CIA) machinery. Interacts with DCPS. The cofactor is FAD. FMN serves as cofactor.

The protein resides in the cytoplasm. It is found in the perinuclear region. It catalyses the reaction 2 oxidized [2Fe-2S]-[protein] + NADPH = 2 reduced [2Fe-2S]-[protein] + NADP(+) + H(+). In terms of biological role, NADPH-dependent reductase which is a central component of the cytosolic iron-sulfur (Fe-S) protein assembly (CIA) machinery. Transfers electrons from NADPH via its FAD and FMN prosthetic groups to the [2Fe-2S] cluster of CIAPIN1, another key component of the CIA machinery. In turn, this reduced cluster provides electrons for assembly of cytosolic iron-sulfur cluster proteins. It can also reduce the [2Fe-2S] cluster of CISD1 and activate this protein implicated in Fe/S cluster repair. In vitro can fully activate methionine synthase/MTR in the presence of soluble cytochrome b5/CYB5A. This is NADPH-dependent diflavin oxidoreductase 1 from Bos taurus (Bovine).